A 305-amino-acid chain; its full sequence is Ankyrin repeat domain-containing protein 23 (305 aa).

Residues 41 to 72 are a coiled coil; sequence QEAVAREKLKLEEEKKKKLERFNSTRFNLDNL. Over residues 83–92 the composition is skewed to basic residues; sequence KKRLRHRVPP. Residues 83–104 are disordered; the sequence is KKRLRHRVPPRKPEPLVKPQSQ. 4 ANK repeats span residues 143 to 172, 176 to 205, 209 to 238, and 242 to 271; these read LHRT…TVDA, LDRT…RVNA, IGST…HLNA, and EGDT…ELGV. The tract at residues 178-195 is interaction with TTN; that stretch reads RTPVFWACRGGHLVILKQ.

As to quaternary structure, interacts with titin/TTN and MYPN. As to expression, mainly expressed in heart, skeletal muscle and brown adipose tissues.

The protein resides in the nucleus. In terms of biological role, may be involved in the energy metabolism. Could be a molecular link between myofibrillar stretch-induced signaling pathways and muscle gene expression. In Homo sapiens (Human), this protein is Ankyrin repeat domain-containing protein 23 (ANKRD23).